Reading from the N-terminus, the 554-residue chain is Sesquiterpene synthase 14b (554 aa).

Positions 305, 309, 449, and 457 each coordinate Mg(2+). Positions 305-309 (DDLYD) match the DDXXD motif motif.

The protein belongs to the terpene synthase family. Tpsa subfamily. Mg(2+) serves as cofactor. The cofactor is Mn(2+).

It carries out the reaction (2E,6E)-farnesyl diphosphate = (E)-gamma-bisabolene + diphosphate. It catalyses the reaction (2Z,6Z)-farnesyl diphosphate = (E)-gamma-bisabolene + diphosphate. The catalysed reaction is (2Z,6Z)-farnesyl diphosphate = (E)-alpha-bisabolene + diphosphate. The enzyme catalyses (2Z,6Z)-farnesyl diphosphate = (Z)-beta-farnesene + diphosphate. It carries out the reaction (2E,6E)-farnesyl diphosphate = (E)-beta-farnesene + diphosphate. It catalyses the reaction (2E,6E)-farnesyl diphosphate = (+)-thujopsene + diphosphate. The catalysed reaction is (2Z,6Z)-farnesyl diphosphate = (E)-beta-farnesene + diphosphate. The enzyme catalyses (2E,6E)-farnesyl diphosphate = (Z)-beta-farnesene + diphosphate. It carries out the reaction (2Z,6Z)-farnesyl diphosphate = beta-acoradiene + diphosphate. It catalyses the reaction (2Z,6Z)-farnesyl diphosphate = alpha-acoradiene + diphosphate. The catalysed reaction is (2Z,6Z)-farnesyl diphosphate = beta-bisabolene + diphosphate. The enzyme catalyses (2E,6E)-farnesyl diphosphate = (-)-alpha-cedrene + diphosphate. It carries out the reaction (2E,6E)-farnesyl diphosphate = beta-bisabolene + diphosphate. It catalyses the reaction (2E,6E)-farnesyl diphosphate = beta-acoradiene + diphosphate. The catalysed reaction is (2Z,6Z)-farnesyl diphosphate = (-)-alpha-cedrene + diphosphate. The enzyme catalyses (2E)-geranyl diphosphate = terpinolene + diphosphate. It carries out the reaction (2E)-geranyl diphosphate = limonene + diphosphate. It catalyses the reaction (2E)-geranyl diphosphate = beta-myrcene + diphosphate. It participates in secondary metabolite biosynthesis; terpenoid biosynthesis. Its function is as follows. Sesquiterpene synthase involved in the biosynthesis of volatile compounds. Mediates the conversion of (2E,6E)-farnesyl diphosphate ((EE)-FPP) into (+)-thujopsene, beta-bisabolene, alpha-cederene, beta-acoradiene, (E)-gamma-bisabolene, (Z)-alpha-bisabolene, (Z)-beta-farnesene and (E)-beta-farnesene, and of (2Z,6Z)-farnesyl diphosphate ((ZZ)-FPP) into (E)-gamma-bisabolene, (E)-alpha-bisabolene, (E)-beta-farnesene, (Z)-beta-farnesene, beta-bisabolene, beta-acoradiene and alpha-acoradiene. Can act with a low efficiency as a monoterpene synthase with geranyl diphosphate (GPP) as substrate, thus producing beta-myrcene, limonene and terpinolene. This Solanum habrochaites (Wild tomato) protein is Sesquiterpene synthase 14b.